A 423-amino-acid polypeptide reads, in one-letter code: TPR repeat-containing protein YpiA (423 aa).

TPR repeat units lie at residues 33 to 66 (DEDKAIAAQLYYEWGDVEKAISLISDLHDLYPNE), 67 to 100 (TELTNFYAELLIDIDEEEKALAVLETIPETDPSY), 135 to 168 (PVIDFALGELYFAQGAYAKAVQYFKTTAEEQSEI), 171 to 204 (VNVHQRLAESLSASGEFEDAIPWYEKAVDENPDP), 238 to 271 (TSLYMPLSKSYEAEGMYEEALKTAKEGIRYDEYN), 272 to 305 (KELFLYAAKMALKIGKSEEGKKLLQEALALDPGF), 306 to 339 (VEALHTLLAVYHKEEDYDQIIDLIQEVRSYGEED), 340 to 373 (PKYNWYLASAYTELEQYEEAKQSFEAAYLHYRED), and 374 to 407 (RDFLYEYASFLLEEGLQKEALPLLKKVLEMDGAN).

As to quaternary structure, interacts with the RNA polymerase core.

This Bacillus subtilis (strain 168) protein is TPR repeat-containing protein YpiA (ypiA).